Reading from the N-terminus, the 123-residue chain is Insulin-like peptide-1 (123 aa).

The signal sequence occupies residues M1–G24. 4 disulfides stabilise this stretch: C29/C106, C41/C109, C53/C122, and C108/C113. P34 carries the 4-hydroxyproline; partial modification. Positions E59–R102 are cleaved as a propeptide — c peptide. E107 is subject to 4-carboxyglutamate. Position 117 is a 4-carboxyglutamate; partial (E117).

It belongs to the insulin family. Heterodimer of A and B chains; disulfide-linked. In terms of tissue distribution, expressed by the venom duct.

The protein resides in the secreted. In terms of biological role, this venom insulin facilitates prey capture by rapidly inducing hypoglycemic shock. Intraperitoneal injection of this peptide into zebrafish lowers blood glucose with the same potency than human insulin. In vivo, when applied to water, this peptide reduces overall locomotor activity of zebrafish larvae, observed as a significant decrease in the percentage of time spent swimming and movement frequency. The chain is Insulin-like peptide-1 from Conus victoriae (Queen Victoria cone).